A 599-amino-acid polypeptide reads, in one-letter code: Sulfite reductase [NADPH] flavoprotein alpha-component (599 aa).

The Flavodoxin-like domain occupies 64 to 202; that stretch reads VTLISASQTG…AASEWRARVV (139 aa). FMN is bound by residues 70-75, 117-120, and 153-162; these read SQTGNA, STQG, and LGDTSYEFFC. One can recognise an FAD-binding FR-type domain in the interval 234–448; that stretch reads DAPLAATLSV…IEHNDNFRLP (215 aa). Residues threonine 322, alanine 356, 386–389, 404–406, tyrosine 410, and 419–422 contribute to the FAD site; these read RLYS, TVG, and GGAS. NADP(+) is bound by residues 519 to 520, 525 to 529, and aspartate 561; these read SR and KIYVQ. Tyrosine 599 contributes to the FAD binding site.

It belongs to the NADPH-dependent sulphite reductase flavoprotein subunit CysJ family. The protein in the N-terminal section; belongs to the flavodoxin family. This sequence in the C-terminal section; belongs to the flavoprotein pyridine nucleotide cytochrome reductase family. Alpha(8)-beta(8). The alpha component is a flavoprotein, the beta component is a hemoprotein. FAD is required as a cofactor. It depends on FMN as a cofactor.

The enzyme catalyses hydrogen sulfide + 3 NADP(+) + 3 H2O = sulfite + 3 NADPH + 4 H(+). It functions in the pathway sulfur metabolism; hydrogen sulfide biosynthesis; hydrogen sulfide from sulfite (NADPH route): step 1/1. Functionally, component of the sulfite reductase complex that catalyzes the 6-electron reduction of sulfite to sulfide. This is one of several activities required for the biosynthesis of L-cysteine from sulfate. The flavoprotein component catalyzes the electron flow from NADPH -&gt; FAD -&gt; FMN to the hemoprotein component. The protein is Sulfite reductase [NADPH] flavoprotein alpha-component of Salmonella paratyphi B (strain ATCC BAA-1250 / SPB7).